We begin with the raw amino-acid sequence, 77 residues long: SS18-like protein 2 (77 aa).

The short motif at 50 to 53 is the SH2-binding element; sequence YQHV.

This sequence belongs to the SS18 family.

In Mus musculus (Mouse), this protein is SS18-like protein 2 (Ss18l2).